The primary structure comprises 133 residues: Small ribosomal subunit protein uS8 (133 aa).

The protein belongs to the universal ribosomal protein uS8 family. Part of the 30S ribosomal subunit. Contacts proteins S5 and S12.

One of the primary rRNA binding proteins, it binds directly to 16S rRNA central domain where it helps coordinate assembly of the platform of the 30S subunit. In Prochlorococcus marinus (strain MIT 9313), this protein is Small ribosomal subunit protein uS8.